The sequence spans 327 residues: Putative gluconeogenesis factor (327 aa).

Belongs to the gluconeogenesis factor family.

It localises to the cytoplasm. Its function is as follows. Required for morphogenesis under gluconeogenic growth conditions. This is Putative gluconeogenesis factor (yjiF) from Lactococcus lactis subsp. lactis (strain IL1403) (Streptococcus lactis).